The sequence spans 459 residues: Ammonium transporter Rh type B (459 aa).

Topologically, residues 1–10 are cytoplasmic; it reads MAESTNLRLR. Residues 11 to 31 form a helical membrane-spanning segment; it reads LPLICIILEVILIILFGVLVE. Topologically, residues 32 to 58 are extracellular; that stretch reads YNDDTDAKKWNKNNSTDPATNEFYYRY. Asn-45 carries N-linked (GlcNAc...) asparagine glycosylation. A helical membrane pass occupies residues 59–79; it reads PSFQDVHVMIFVGFGFLMTFL. Residues 80-87 are Cytoplasmic-facing; that stretch reads QRYGFSSM. A helical membrane pass occupies residues 88 to 108; it reads GFNFLIAAFSLQWATLMQGFF. The Extracellular portion of the chain corresponds to 109–121; the sequence is HGMHHGKIHVGVT. The chain crosses the membrane as a helical span at residues 122 to 142; it reads SMINADFCTGAVLISFGAVLG. Over 143-149 the chain is Cytoplasmic; sequence KTSPVQL. Residues 150–170 form a helical membrane-spanning segment; it reads LVMAILEVTLFAVNEYILLSI. Topologically, residues 171–176 are extracellular; sequence LGANDA. The helical transmembrane segment at 177-197 threads the bilayer; the sequence is GGSMTIHTFGAYFGLMVTRIL. Over 198 to 216 the chain is Cytoplasmic; that stretch reads HRPNLDKSKHKNSSVYHSD. A helical transmembrane segment spans residues 217 to 237; sequence LFAMIGTIFLWMFWPSFNSAI. The Extracellular portion of the chain corresponds to 238-248; the sequence is TQYGDPQHRTA. A helical membrane pass occupies residues 249 to 269; it reads ANTYYSLAACTLATFGFSSLV. Residues 270–274 lie on the Cytoplasmic side of the membrane; it reads NPEGK. The chain crosses the membrane as a helical span at residues 275 to 295; sequence LDMVHIQNAALAGGVAVGTAG. A topological domain (extracellular) is located at residue Glu-296. Residues 297–317 traverse the membrane as a helical segment; the sequence is MMLTPFGSMIVGFLAGTISVL. Residues 318–340 lie on the Cytoplasmic side of the membrane; sequence GYKYLTPFMESKLKIQDTCGIHN. The chain crosses the membrane as a helical span at residues 341-361; the sequence is LHGMPGILGAIVGAVTAALAS. Over 362–392 the chain is Extracellular; it reads RDVYGNGLDKVFLEAADNSQWSAQTKGGFQA. The helical transmembrane segment at 393 to 413 threads the bilayer; the sequence is ISLAVTLGIALIGGLITGFLL. At 414–459 the chain is on the cytoplasmic side; the sequence is KLPIYGTPPDTQCFEDAVYWEVPGEEEDHHELNEVSTQNEVEKLNS. The disordered stretch occupies residues 440–459; it reads EDHHELNEVSTQNEVEKLNS.

Belongs to the ammonium transporter (TC 2.A.49) family. Rh subfamily.

It localises to the basolateral cell membrane. It is found in the cytoplasmic vesicle membrane. In terms of biological role, functions as an ammonia transporter. May play a role in the elimination of ammonia in the gill. The sequence is that of Ammonium transporter Rh type B (rhbg) from Danio rerio (Zebrafish).